Here is a 645-residue protein sequence, read N- to C-terminus: Translation factor GUF1, mitochondrial (645 aa).

The region spanning 44–228 is the tr-type G domain; that stretch reads ENYRNFSIVA…AIIDRIPPPT (185 aa). Residues 53 to 60, 120 to 124, and 174 to 177 each bind GTP; these read AHVDHGKS, DTPGH, and NKID.

It belongs to the TRAFAC class translation factor GTPase superfamily. Classic translation factor GTPase family. LepA subfamily.

It is found in the mitochondrion inner membrane. The catalysed reaction is GTP + H2O = GDP + phosphate + H(+). Its function is as follows. Promotes mitochondrial protein synthesis. May act as a fidelity factor of the translation reaction, by catalyzing a one-codon backward translocation of tRNAs on improperly translocated ribosomes. Binds to mitochondrial ribosomes in a GTP-dependent manner. This is Translation factor GUF1, mitochondrial from Saccharomyces cerevisiae (strain ATCC 204508 / S288c) (Baker's yeast).